Reading from the N-terminus, the 146-residue chain is Ataxin-7-like protein 1 (146 aa).

Disordered stretches follow at residues 1 to 27 (MTSE…QEGT) and 125 to 146 (KRNA…QRQV). The span at 127-138 (NASISWSGAESR) shows a compositional bias: polar residues.

In Mus musculus (Mouse), this protein is Ataxin-7-like protein 1 (Atxn7l1).